We begin with the raw amino-acid sequence, 345 residues long: MSTLELHGIGKSYNAIRVLEHIDLQVAAGSRTAIVGPSGSGKTTLLRIIAGFEIPDGGQILLQGQAMGNGSGWVPAHLRGIGFVPQDGALFPHFTVAGNIGFGLKGGKREKQRRIEALMEMVALDRRLAALWPHELSGGQQQRVALARALSQQPRLMLLDEPFSALDTGLRAATRKAVAELLTEAKVASILVTHDQSEALSFADQVAVMRSGRLAQVGAPQDLYLRPVDEPTASFLGETLVLTAELAHGWADCALGRIAVDDRQRSGPARIMLRPEQIQIGLSDPAQRGQAVITGIDFAGFVSTLNLQMAATGAQLEIKTVSREGLRPGAQVTLNVMGQAHIFAG.

The ABC transporter domain occupies 4 to 236; the sequence is LELHGIGKSY…PVDEPTASFL (233 aa). 36–43 lines the ATP pocket; that stretch reads GPSGSGKT.

It belongs to the ABC transporter superfamily. Fe(3+) ion importer (TC 3.A.1.10) family. As to quaternary structure, the complex is composed of two ATP-binding proteins (FbpC), two transmembrane proteins (FbpB) and a solute-binding protein (FbpA).

The protein localises to the cell inner membrane. The catalysed reaction is Fe(3+)(out) + ATP + H2O = Fe(3+)(in) + ADP + phosphate + H(+). Functionally, part of the ABC transporter complex FbpABC involved in Fe(3+) ions import. Responsible for energy coupling to the transport system. This is Fe(3+) ions import ATP-binding protein FbpC from Serratia marcescens.